The sequence spans 475 residues: Ankyrin repeat, SAM and basic leucine zipper domain-containing protein 1 (475 aa).

Positions 1 to 25 are disordered; that stretch reads MAAGALRGLPVAGGGESSESEDDGW. 3 positions are modified to phosphoserine: serine 17, serine 18, and serine 20. 6 ANK repeats span residues 45–74, 78–107, 110–144, 148–177, 181–210, and 214–243; these read EKKEKFKKAMTIGDVSLVQELLDSGISVDS, YGWTPLMYAASVANAELVRVLLDRGANASF, DKQSILITACSARGSEEQILKCVELLLSRNADPNV, RLMTPIMYAARDGHTQVVALLVAHGAEVNT, NGYTALTWAARQGHKNIVLKLLELGANKML, and DGKMPSEIAKRNKHHEIFNLLSFTLNPLEG. Positions 272–334 constitute an SAM domain; sequence SYTAFGDLEV…KILAALKELQ (63 aa).

Interacts with DDX4, PIWIL1, RANBP9 and TDRD1.

The protein resides in the cytoplasm. Its function is as follows. Plays a central role during spermatogenesis by repressing transposable elements and preventing their mobilization, which is essential for the germline integrity. Acts via the piRNA metabolic process, which mediates the repression of transposable elements during meiosis by forming complexes composed of piRNAs and Piwi proteins and governs the methylation and subsequent repression of transposons. Its association with pi-bodies suggests a participation in the primary piRNAs metabolic process. Required prior to the pachytene stage to facilitate the production of multiple types of piRNAs, including those associated with repeats involved in the regulation of retrotransposons. May act by mediating protein-protein interactions during germ cell maturation. In Pongo abelii (Sumatran orangutan), this protein is Ankyrin repeat, SAM and basic leucine zipper domain-containing protein 1 (ASZ1).